The chain runs to 1385 residues: DNA-directed RNA polymerase subunit beta' (1385 aa).

Zn(2+) contacts are provided by cysteine 72, cysteine 74, cysteine 87, and cysteine 90. Mg(2+) contacts are provided by aspartate 467, aspartate 469, and aspartate 471. Residues cysteine 829, cysteine 910, cysteine 917, and cysteine 920 each contribute to the Zn(2+) site.

Belongs to the RNA polymerase beta' chain family. The RNAP catalytic core consists of 2 alpha, 1 beta, 1 beta' and 1 omega subunit. When a sigma factor is associated with the core the holoenzyme is formed, which can initiate transcription. Requires Mg(2+) as cofactor. Zn(2+) serves as cofactor.

It catalyses the reaction RNA(n) + a ribonucleoside 5'-triphosphate = RNA(n+1) + diphosphate. Functionally, DNA-dependent RNA polymerase catalyzes the transcription of DNA into RNA using the four ribonucleoside triphosphates as substrates. This Elusimicrobium minutum (strain Pei191) protein is DNA-directed RNA polymerase subunit beta'.